A 553-amino-acid chain; its full sequence is HTH-type transcriptional regulator SgrR (553 aa).

In terms of domain architecture, HTH marR-type spans 1–117 (MPSSRLQQQF…LSQIERRFRQ (117 aa)). The H-T-H motif DNA-binding region spans 26–49 (LQELANVLHCSKRHIRSLLNNMQK). The interval 163-494 (EPEADLAHHW…NDLSKEVSQW (332 aa)) is solute-binding.

In terms of biological role, activates the small RNA gene sgrS under glucose-phosphate stress conditions as well as yfdZ. Represses its own transcription under both stress and non-stress conditions. Might act as a sensor of the intracellular accumulation of phosphoglucose by binding these molecules in its C-terminal solute-binding domain. The sequence is that of HTH-type transcriptional regulator SgrR from Photorhabdus laumondii subsp. laumondii (strain DSM 15139 / CIP 105565 / TT01) (Photorhabdus luminescens subsp. laumondii).